We begin with the raw amino-acid sequence, 196 residues long: Large ribosomal subunit protein uL11m (196 aa).

This sequence belongs to the universal ribosomal protein uL11 family. As to quaternary structure, component of the mitochondrial ribosome large subunit (39S) which comprises a 16S rRNA and about 50 distinct proteins.

It is found in the mitochondrion. This chain is Large ribosomal subunit protein uL11m (mRpL11), found in Drosophila melanogaster (Fruit fly).